A 377-amino-acid polypeptide reads, in one-letter code: UPF0754 membrane protein lin2327 (377 aa).

Transmembrane regions (helical) follow at residues 1 to 21 and 357 to 377; these read MSVL…GAMT and YLGG…AMWI.

This sequence belongs to the UPF0754 family.

It is found in the cell membrane. In Listeria innocua serovar 6a (strain ATCC BAA-680 / CLIP 11262), this protein is UPF0754 membrane protein lin2327.